The chain runs to 251 residues: 2,3-bisphosphoglycerate-dependent phosphoglycerate mutase (251 aa).

Residues 13-20 (RHGESEWN), 26-27 (TG), arginine 65, 92-95 (ERHY), lysine 103, 119-120 (RR), and 186-187 (GN) each bind substrate. Catalysis depends on histidine 14, which acts as the Tele-phosphohistidine intermediate. Glutamate 92 (proton donor/acceptor) is an active-site residue.

It belongs to the phosphoglycerate mutase family. BPG-dependent PGAM subfamily.

It carries out the reaction (2R)-2-phosphoglycerate = (2R)-3-phosphoglycerate. Its pathway is carbohydrate degradation; glycolysis; pyruvate from D-glyceraldehyde 3-phosphate: step 3/5. Catalyzes the interconversion of 2-phosphoglycerate and 3-phosphoglycerate. The sequence is that of 2,3-bisphosphoglycerate-dependent phosphoglycerate mutase from Rhodococcus opacus (strain B4).